The sequence spans 21 residues: 40 kDa major outer membrane protein (21 aa).

In terms of assembly, disulfide bond interactions within and between MOMP molecules and other components form high molecular-weight oligomers.

The protein localises to the cell outer membrane. Its function is as follows. Structural rigidity of the outer membrane of elementary bodies and porin forming, permitting diffusion of solutes through the intracellular reticulate body membrane. This is 40 kDa major outer membrane protein from Actinobacillus pleuropneumoniae (Haemophilus pleuropneumoniae).